A 148-amino-acid chain; its full sequence is Probable transcriptional regulator SyrB (148 aa).

The segment at 1–58 (MADESNTGPVAAAEAVAETQAPAGKRKSSSRRQRTAAGQVAESKTTAKPKRYSETERA) is disordered. Residues 7–23 (TGPVAAAEAVAETQAPA) show a composition bias toward low complexity. Residues 24 to 34 (GKRKSSSRRQR) show a composition bias toward basic residues.

Belongs to the SyrB family.

Functionally, responsible for the repression of SyrM activity. The sequence is that of Probable transcriptional regulator SyrB (syrB) from Sinorhizobium fredii (strain NBRC 101917 / NGR234).